Reading from the N-terminus, the 117-residue chain is Ribonuclease P protein component (117 aa).

Belongs to the RnpA family. Consists of a catalytic RNA component (M1 or rnpB) and a protein subunit.

It catalyses the reaction Endonucleolytic cleavage of RNA, removing 5'-extranucleotides from tRNA precursor.. Its function is as follows. RNaseP catalyzes the removal of the 5'-leader sequence from pre-tRNA to produce the mature 5'-terminus. It can also cleave other RNA substrates such as 4.5S RNA. The protein component plays an auxiliary but essential role in vivo by binding to the 5'-leader sequence and broadening the substrate specificity of the ribozyme. This chain is Ribonuclease P protein component, found in Staphylococcus aureus (strain MW2).